A 156-amino-acid polypeptide reads, in one-letter code: D-aminoacyl-tRNA deacylase (156 aa).

The short motif at 139–140 is the Gly-cisPro motif, important for rejection of L-amino acids element; it reads GP.

This sequence belongs to the DTD family. Homodimer.

Its subcellular location is the cytoplasm. It carries out the reaction glycyl-tRNA(Ala) + H2O = tRNA(Ala) + glycine + H(+). It catalyses the reaction a D-aminoacyl-tRNA + H2O = a tRNA + a D-alpha-amino acid + H(+). Its function is as follows. An aminoacyl-tRNA editing enzyme that deacylates mischarged D-aminoacyl-tRNAs. Also deacylates mischarged glycyl-tRNA(Ala), protecting cells against glycine mischarging by AlaRS. Acts via tRNA-based rather than protein-based catalysis; rejects L-amino acids rather than detecting D-amino acids in the active site. By recycling D-aminoacyl-tRNA to D-amino acids and free tRNA molecules, this enzyme counteracts the toxicity associated with the formation of D-aminoacyl-tRNA entities in vivo and helps enforce protein L-homochirality. The polypeptide is D-aminoacyl-tRNA deacylase (Marinobacter nauticus (strain ATCC 700491 / DSM 11845 / VT8) (Marinobacter aquaeolei)).